The sequence spans 84 residues: Large ribosomal subunit protein bL28 (84 aa).

This sequence belongs to the bacterial ribosomal protein bL28 family.

This Clostridium perfringens (strain 13 / Type A) protein is Large ribosomal subunit protein bL28.